Reading from the N-terminus, the 570-residue chain is Periplasmic trehalase (570 aa).

An N-terminal signal peptide occupies residues 1-34 (MIPPEIRRSVLLQKAIKLALAGTLLTFASFSATA). Substrate is bound by residues Arg-159, 166–167 (WD), Asn-203, 212–214 (RSQ), 284–286 (RPE), and Gly-317. Catalysis depends on proton donor/acceptor residues Asp-319 and Glu-503. Substrate is bound at residue Glu-518. The disordered stretch occupies residues 544-570 (KPCDSVPSTRPASLSATPTKTPSAATQ). Low complexity predominate over residues 554 to 570 (PASLSATPTKTPSAATQ).

Belongs to the glycosyl hydrolase 37 family. Monomer.

Its subcellular location is the periplasm. It carries out the reaction alpha,alpha-trehalose + H2O = alpha-D-glucose + beta-D-glucose. In terms of biological role, provides the cells with the ability to utilize trehalose at high osmolarity by splitting it into glucose molecules that can subsequently be taken up by the phosphotransferase-mediated uptake system. The protein is Periplasmic trehalase of Salmonella schwarzengrund (strain CVM19633).